A 553-amino-acid polypeptide reads, in one-letter code: Undecaprenyl phosphate-alpha-4-amino-4-deoxy-L-arabinose arabinosyl transferase (553 aa).

12 helical membrane passes run 8-28 (LVLLLGFTLLYLLPLEFRALW), 83-103 (VRFGAVFSTTLSALMVAWLAF), 111-131 (VAVLSGVIFLTCLLVYGVGTY), 132-152 (AVLDPMITLWLVAAMCSFWLG), 176-196 (VMTKGFLALAVPVLGVLPWVI), 204-224 (VLLFGPLAIISATLITLPWAL), 255-275 (APFWYYIPFLIAGCLPWVALL), 288-308 (IESGTLYLLGWVVMPLLFFSI), 317-337 (ILPCFAPLAILLARHATQLVA), 350-370 (TVFGAVCALIVLLVLAPWGIA), 380-400 (VLKVIQASIAFLVWALVGYLT), and 407-427 (LWQWAALCPLGIALLVGGMIP).

Belongs to the glycosyltransferase 83 family.

It localises to the cell inner membrane. The enzyme catalyses 4-amino-4-deoxy-alpha-L-arabinopyranosyl di-trans,octa-cis-undecaprenyl phosphate + lipid IVA = lipid IIA + di-trans,octa-cis-undecaprenyl phosphate.. Its pathway is lipopolysaccharide metabolism; 4-amino-4-deoxy-beta-L-arabinose-lipid A biosynthesis. Functionally, catalyzes the transfer of the L-Ara4N moiety of the glycolipid undecaprenyl phosphate-alpha-L-Ara4N to lipid A. The modified arabinose is attached to lipid A and is required for resistance to polymyxin and cationic antimicrobial peptides. This chain is Undecaprenyl phosphate-alpha-4-amino-4-deoxy-L-arabinose arabinosyl transferase, found in Enterobacter sp. (strain 638).